The chain runs to 119 residues: Large ribosomal subunit protein bL20 (119 aa).

It belongs to the bacterial ribosomal protein bL20 family.

Binds directly to 23S ribosomal RNA and is necessary for the in vitro assembly process of the 50S ribosomal subunit. It is not involved in the protein synthesizing functions of that subunit. The polypeptide is Large ribosomal subunit protein bL20 (Colwellia psychrerythraea (strain 34H / ATCC BAA-681) (Vibrio psychroerythus)).